The following is a 180-amino-acid chain: 2-oxoglutarate dehydrogenase, mitochondrial (180 aa).

At K14 the chain carries N6-succinyllysine. Position 40 is a phosphoserine (S40). R64 contributes to the thiamine diphosphate binding site.

The protein belongs to the alpha-ketoglutarate dehydrogenase family. Homodimer. The 2-oxoglutarate dehydrogenase complex is composed of OGDH (2-oxoglutarate dehydrogenase; E1), DLST (dihydrolipoamide succinyltransferase; E2) and DLD (dihydrolipoamide dehydrogenase; E3). It contains multiple copies of the three enzymatic components (E1, E2 and E3). In the nucleus, the 2-oxoglutarate dehydrogenase complex associates with KAT2A. Interacts with ABHD11; this interaction maintains the functional lipoylation of the 2-oxoglutarate dehydrogenase complex. The cofactor is thiamine diphosphate. Mg(2+) serves as cofactor.

It localises to the mitochondrion matrix. It is found in the nucleus. The enzyme catalyses N(6)-[(R)-lipoyl]-L-lysyl-[protein] + 2-oxoglutarate + H(+) = N(6)-[(R)-S(8)-succinyldihydrolipoyl]-L-lysyl-[protein] + CO2. With respect to regulation, calcium ions and ADP stimulate, whereas ATP and NADH reduce catalytic activity. In terms of biological role, 2-oxoglutarate dehydrogenase (E1) component of the 2-oxoglutarate dehydrogenase complex (OGDHC), which mediates the decarboxylation of alpha-ketoglutarate. The 2-oxoglutarate dehydrogenase complex catalyzes the overall conversion of 2-oxoglutarate to succinyl-CoA and CO(2). The 2-oxoglutarate dehydrogenase complex is mainly active in the mitochondrion. A fraction of the 2-oxoglutarate dehydrogenase complex also localizes in the nucleus and is required for lysine succinylation of histones: associates with KAT2A on chromatin and provides succinyl-CoA to histone succinyltransferase KAT2A. The sequence is that of 2-oxoglutarate dehydrogenase, mitochondrial from Mesocricetus auratus (Golden hamster).